The primary structure comprises 710 residues: Integrator complex subunit 10 (710 aa).

Residues Ser-231, Ser-381, and Ser-382 each carry the phosphoserine modification. Lys-464 is covalently cross-linked (Glycyl lysine isopeptide (Lys-Gly) (interchain with G-Cter in SUMO2)).

The protein belongs to the Integrator subunit 10 family. As to quaternary structure, component of the Integrator complex, composed of core subunits INTS1, INTS2, INTS3, INTS4, INTS5, INTS6, INTS7, INTS8, INTS9/RC74, INTS10, INTS11/CPSF3L, INTS12, INTS13, INTS14 and INTS15. The core complex associates with protein phosphatase 2A subunits PPP2CA and PPP2R1A, to form the Integrator-PP2A (INTAC) complex. INTS10 is part of the tail subcomplex, composed of INTS10, INTS13, INTS14 and INTS15.

It is found in the nucleus. In terms of biological role, component of the integrator complex, a multiprotein complex that terminates RNA polymerase II (Pol II) transcription in the promoter-proximal region of genes. The integrator complex provides a quality checkpoint during transcription elongation by driving premature transcription termination of transcripts that are unfavorably configured for transcriptional elongation: the complex terminates transcription by (1) catalyzing dephosphorylation of the C-terminal domain (CTD) of Pol II subunit POLR2A/RPB1 and SUPT5H/SPT5, (2) degrading the exiting nascent RNA transcript via endonuclease activity and (3) promoting the release of Pol II from bound DNA. The integrator complex is also involved in terminating the synthesis of non-coding Pol II transcripts, such as enhancer RNAs (eRNAs), small nuclear RNAs (snRNAs), telomerase RNAs and long non-coding RNAs (lncRNAs). Within the integrator complex, INTS10 is part of the integrator tail module that acts as a platform for the recruitment of transcription factors at promoters. May be not involved in the recruitment of cytoplasmic dynein to the nuclear envelope, probably as component of the integrator complex. In Homo sapiens (Human), this protein is Integrator complex subunit 10.